The sequence spans 673 residues: Cell division cycle protein 23 homolog (673 aa).

10 TPR repeats span residues 86-120 (AEMWTNEILAHLPDKWCAPNTLNLYNQVSELVLDN), 159-195 (NKEFRRAAFFLEKTMNGNKLDHFLHFRCLFLAYYQEH), 232-267 (EDVWFEYLMGLLEVELGLKDLAEKSFRNVVIREPRI), 332-365 (PMIITKIAACSNARHDHDQAISNFEDVRKADPYR), 400-433 (WETCCIVANYHAIRRDSEHAIKFFQRALRLNPGL), 434-467 (AALWVLIGHEFMEMKNNAAACVSYRRAIEIDPAD), 469-501 (RGWYGLGQMYDIMKMPAYALFYYQEAQKCKPHD), 502-535 (SRLLVALGDIYSKLNRIEDAEKCFTGAYLFGDVE), 539-572 (LWSLAKLHERYSDDNKAAQAFEVFLVVYELVTSA), and 577-610 (IYAIAFLANHFFKIEDFDKASEYATKCLAFETLC). A disordered region spans residues 628 to 673 (SRLPVEEAPGPSNASAAGGQEAMDTEEAPQEGGEEEMSEGEDDFSF). The segment covering 635 to 646 (APGPSNASAAGG) has biased composition (low complexity). The segment covering 650-673 (MDTEEAPQEGGEEEMSEGEDDFSF) has biased composition (acidic residues).

Belongs to the APC8/CDC23 family. The APC/C complex is probably composed of at least 12 subunits: apc-2, apc-10, apc-11, cdc-26, emb-1, emb-27, emb-30, mat-1, mat-2, mat-3, such-1 and gfi-3.

It functions in the pathway protein modification; protein ubiquitination. Functionally, probable component of the anaphase promoting complex/cyclosome (APC/C), a cell cycle-regulated E3 ubiquitin ligase that controls progression through mitosis and the G1 phase of the cell cycle. The APC/C complex acts by mediating ubiquitination and subsequent degradation of target proteins. Developmental role in early embryogenesis and the metaphase to anaphase transition in oocyte and spermatocyte meiosis and mitosis in germ cells. Required for embryonic anterior-posterior axis formation. Plays a role in regulating the abundance of glr-1 receptors in postmitotic neurons, which may in turn control animal locomotion. Involved in regulating GABA neurotransmitter release at neuromuscular junctions in GABA motor neurons. The protein is Cell division cycle protein 23 homolog of Caenorhabditis elegans.